A 362-amino-acid polypeptide reads, in one-letter code: Protein-glutamate methylesterase/protein-glutamine glutaminase 1 (362 aa).

Positions 10–127 (RVLVVDDSSF…ADAQRVFREE (118 aa)) constitute a Response regulatory domain. A 4-aspartylphosphate modification is found at Asp-61. A CheB-type methylesterase domain is found at 163–357 (PRPSQALAGK…LPLTQIGSEI (195 aa)). Active-site residues include Ser-181, His-208, and Asp-306.

It belongs to the CheB family. In terms of processing, phosphorylated by CheA. Phosphorylation of the N-terminal regulatory domain activates the methylesterase activity.

The protein resides in the cytoplasm. It catalyses the reaction [protein]-L-glutamate 5-O-methyl ester + H2O = L-glutamyl-[protein] + methanol + H(+). The enzyme catalyses L-glutaminyl-[protein] + H2O = L-glutamyl-[protein] + NH4(+). In terms of biological role, involved in chemotaxis. Part of a chemotaxis signal transduction system that modulates chemotaxis in response to various stimuli. Catalyzes the demethylation of specific methylglutamate residues introduced into the chemoreceptors (methyl-accepting chemotaxis proteins or MCP) by CheR. Also mediates the irreversible deamidation of specific glutamine residues to glutamic acid. This chain is Protein-glutamate methylesterase/protein-glutamine glutaminase 1, found in Geobacter sulfurreducens (strain ATCC 51573 / DSM 12127 / PCA).